Here is a 283-residue protein sequence, read N- to C-terminus: S-methyl-5'-thioadenosine phosphorylase (283 aa).

Residue Thr-18 coordinates phosphate. An N6-acetyllysine modification is found at Lys-51. Phosphate-binding positions include 60-61 (RH) and 93-94 (TA). Substrate is bound at residue Met-196. Phosphate is bound at residue Thr-197. 220–222 (DYD) is a substrate binding site.

This sequence belongs to the PNP/MTAP phosphorylase family. MTAP subfamily. As to quaternary structure, homotrimer.

The protein resides in the cytoplasm. It localises to the nucleus. It carries out the reaction S-methyl-5'-thioadenosine + phosphate = 5-(methylsulfanyl)-alpha-D-ribose 1-phosphate + adenine. The protein operates within amino-acid biosynthesis; L-methionine biosynthesis via salvage pathway; S-methyl-5-thio-alpha-D-ribose 1-phosphate from S-methyl-5'-thioadenosine (phosphorylase route): step 1/1. Its function is as follows. Catalyzes the reversible phosphorylation of S-methyl-5'-thioadenosine (MTA) to adenine and 5-methylthioribose-1-phosphate. Involved in the breakdown of MTA, a major by-product of polyamine biosynthesis. Responsible for the first step in the methionine salvage pathway after MTA has been generated from S-adenosylmethionine. Has broad substrate specificity with 6-aminopurine nucleosides as preferred substrates. In Bos taurus (Bovine), this protein is S-methyl-5'-thioadenosine phosphorylase.